Here is a 620-residue protein sequence, read N- to C-terminus: Arginine--tRNA ligase (620 aa).

Positions 147–157 match the 'HIGH' region motif; sequence ANPTGPIHIGG.

This sequence belongs to the class-I aminoacyl-tRNA synthetase family. In terms of assembly, monomer.

It is found in the cytoplasm. The enzyme catalyses tRNA(Arg) + L-arginine + ATP = L-arginyl-tRNA(Arg) + AMP + diphosphate. The polypeptide is Arginine--tRNA ligase (Bifidobacterium longum subsp. infantis (strain ATCC 15697 / DSM 20088 / JCM 1222 / NCTC 11817 / S12)).